The sequence spans 217 residues: Ribonuclease HII (217 aa).

In terms of domain architecture, RNase H type-2 spans 27–216 (SRIAGVDEAG…VKESIREGIC (190 aa)). The a divalent metal cation site is built by aspartate 33, glutamate 34, and aspartate 126.

The protein belongs to the RNase HII family. Mn(2+) is required as a cofactor. Mg(2+) serves as cofactor.

The protein resides in the cytoplasm. It carries out the reaction Endonucleolytic cleavage to 5'-phosphomonoester.. In terms of biological role, endonuclease that specifically degrades the RNA of RNA-DNA hybrids. This Chlamydia muridarum (strain MoPn / Nigg) protein is Ribonuclease HII (rnhB).